The following is a 159-amino-acid chain: SsrA-binding protein (159 aa).

Residues 132–159 (KDFDKRHTEKERDSDREIQRAMRHGKDD) are disordered.

This sequence belongs to the SmpB family.

The protein resides in the cytoplasm. Functionally, required for rescue of stalled ribosomes mediated by trans-translation. Binds to transfer-messenger RNA (tmRNA), required for stable association of tmRNA with ribosomes. tmRNA and SmpB together mimic tRNA shape, replacing the anticodon stem-loop with SmpB. tmRNA is encoded by the ssrA gene; the 2 termini fold to resemble tRNA(Ala) and it encodes a 'tag peptide', a short internal open reading frame. During trans-translation Ala-aminoacylated tmRNA acts like a tRNA, entering the A-site of stalled ribosomes, displacing the stalled mRNA. The ribosome then switches to translate the ORF on the tmRNA; the nascent peptide is terminated with the 'tag peptide' encoded by the tmRNA and targeted for degradation. The ribosome is freed to recommence translation, which seems to be the essential function of trans-translation. This is SsrA-binding protein from Pseudomonas aeruginosa (strain LESB58).